We begin with the raw amino-acid sequence, 141 residues long: MARSITMQQRIEFGDCDPAGIVWFPNYHRWLDAASRNYFIKCGLPPWRQTVVERGIVGTPIVSCNASFVCTASYDDVLTIETCIKEWRRKSFVQRHSVSRTTPGGDVQLVMRADEIRVFAMNDGERLRAIEVPADYIELCS.

Residue Asp17 is part of the active site. Residues Trp47, 59-61 (TPI), and Lys90 contribute to the substrate site.

This sequence belongs to the 4-hydroxybenzoyl-CoA thioesterase family. In terms of assembly, homotetramer.

The catalysed reaction is 4-hydroxybenzoyl-CoA + H2O = 4-hydroxybenzoate + CoA + H(+). Its pathway is xenobiotic degradation; 4-chlorobenzoate degradation; 4-hydroxybenzoate from 4-chlorobenzoate: step 3/3. Unaffected by EDTA, Mg(2+), Mn(2+), Fe(2+), Ca(2+), Co(2+) and Zn(2+). Its function is as follows. Hydrolyzes 4-hydroxybenzoate-CoA, and to a lesser extent benzoyl-CoA and 4-chlorobenzoate-CoA. Not active against aliphatic acyl-CoA thioesters, including palmitoyl-CoA, hexanoyl-CoA and acetyl-CoA. In Pseudomonas sp. (strain CBS-3), this protein is 4-hydroxybenzoyl-CoA thioesterase.